Here is an 842-residue protein sequence, read N- to C-terminus: Alanine--tRNA ligase (842 aa).

The Zn(2+) site is built by His-549, His-553, Cys-650, and His-654.

The protein belongs to the class-II aminoacyl-tRNA synthetase family. Zn(2+) serves as cofactor.

It is found in the cytoplasm. It carries out the reaction tRNA(Ala) + L-alanine + ATP = L-alanyl-tRNA(Ala) + AMP + diphosphate. Its function is as follows. Catalyzes the attachment of alanine to tRNA(Ala) in a two-step reaction: alanine is first activated by ATP to form Ala-AMP and then transferred to the acceptor end of tRNA(Ala). Also edits incorrectly charged Ser-tRNA(Ala) and Gly-tRNA(Ala) via its editing domain. This Campylobacter jejuni subsp. jejuni serotype O:6 (strain 81116 / NCTC 11828) protein is Alanine--tRNA ligase.